The sequence spans 506 residues: MPASSLDELVALCKRRGFIFQSSEIYGGLQGVYDYGPLGVELKNNLKQAWWRRNVYERDDMEGLDASVLTHRLVLHYSGHEATFADPMVDNRITKKRYRLDHLLKEQPEEVLKRLYRAMEVEEGNLHALVQAMMQAPERAGGAMTAAGVLDPASGEPGDWTPPRYFNMMFKTYVGPVEDEAALAYLRPETAQGIFVNFKNVLDATSRKLPFGIAQIGKAFRNEITPRNFIFRVREFEQMEIEYFVRPGEDEYWHRYWVEERLKWWQEMGLSRENLVPYEQPPEELAHYAKATVDILYRFPHGLEELEGIANRTDFDLGSHTKDQEALGITARVLRNEHSTQRLAYRDPETGKWFVPYVIEPSAGVDRGVLALLAEAFTREELPNGEERIVLKLKPQLAPIKVAVIPLVKNRPEITEYAKRLKARLLALGLGRVLYEDTGNIGKAYRRHDEVGTPFAVTVDYDTIGQSKDGTTRLKDTVTVRDRDTMEQIRLHVDELEGFLRERLKW.

Substrate-binding residues include R99 and E189. Residues 221 to 223 (RNE), 231 to 236 (FRVREF), 305 to 306 (EL), and 364 to 367 (GVDR) each bind ATP. 236 to 240 (FEQME) is a substrate binding site. Residue 360-364 (EPSAG) coordinates substrate.

It belongs to the class-II aminoacyl-tRNA synthetase family. As to quaternary structure, homodimer.

It localises to the cytoplasm. The enzyme catalyses tRNA(Gly) + glycine + ATP = glycyl-tRNA(Gly) + AMP + diphosphate. In terms of biological role, catalyzes the attachment of glycine to tRNA(Gly). The chain is Glycine--tRNA ligase from Thermus thermophilus (strain ATCC BAA-163 / DSM 7039 / HB27).